Consider the following 130-residue polypeptide: Small ribosomal subunit protein uS8 (130 aa).

This sequence belongs to the universal ribosomal protein uS8 family. Part of the 30S ribosomal subunit. Contacts proteins S5 and S12.

In terms of biological role, one of the primary rRNA binding proteins, it binds directly to 16S rRNA central domain where it helps coordinate assembly of the platform of the 30S subunit. This Haemophilus influenzae (strain 86-028NP) protein is Small ribosomal subunit protein uS8.